We begin with the raw amino-acid sequence, 474 residues long: Trehalose-6-phosphate synthase (474 aa).

R10 lines the D-glucose 6-phosphate pocket. 22-23 (GG) lines the UDP-alpha-D-glucose pocket. Y77 and D131 together coordinate D-glucose 6-phosphate. Residues R263 and K268 each coordinate UDP-alpha-D-glucose. R301 provides a ligand contact to D-glucose 6-phosphate. UDP-alpha-D-glucose-binding positions include F340 and 366–370 (LVAKE).

It belongs to the glycosyltransferase 20 family. Homotetramer.

It carries out the reaction D-glucose 6-phosphate + UDP-alpha-D-glucose = alpha,alpha-trehalose 6-phosphate + UDP + H(+). The protein operates within glycan biosynthesis; trehalose biosynthesis. Probably involved in the osmoprotection via the biosynthesis of trehalose. Catalyzes the transfer of glucose from UDP-alpha-D-glucose (UDP-Glc) to D-glucose 6-phosphate (Glc-6-P) to form trehalose-6-phosphate. Acts with retention of the anomeric configuration of the UDP-sugar donor. In Pseudomonas savastanoi (Pseudomonas syringae pv. savastanoi), this protein is Trehalose-6-phosphate synthase.